The primary structure comprises 61 residues: MLILTRKVGETVLIGDDISITVLNIRGNQVKIGIEAPKDVTVHREEIYERIKLAAEDNNHV.

Belongs to the CsrA/RsmA family. In terms of assembly, homodimer; the beta-strands of each monomer intercalate to form a hydrophobic core, while the alpha-helices form wings that extend away from the core.

The protein resides in the cytoplasm. A key translational regulator that binds mRNA to regulate translation initiation and/or mRNA stability. Mediates global changes in gene expression, shifting from rapid growth to stress survival by linking envelope stress, the stringent response and the catabolite repression systems. Usually binds in the 5'-UTR; binding at or near the Shine-Dalgarno sequence prevents ribosome-binding, repressing translation, binding elsewhere in the 5'-UTR can activate translation and/or stabilize the mRNA. Its function is antagonized by small RNA(s). The protein is Translational regulator CsrA of Actinobacillus succinogenes (strain ATCC 55618 / DSM 22257 / CCUG 43843 / 130Z).